The primary structure comprises 66 residues: DNA-directed RNA polymerase subunit omega (66 aa).

The protein belongs to the RNA polymerase subunit omega family. As to quaternary structure, the RNAP catalytic core consists of 2 alpha, 1 beta, 1 beta' and 1 omega subunit. When a sigma factor is associated with the core the holoenzyme is formed, which can initiate transcription.

The enzyme catalyses RNA(n) + a ribonucleoside 5'-triphosphate = RNA(n+1) + diphosphate. In terms of biological role, promotes RNA polymerase assembly. Latches the N- and C-terminal regions of the beta' subunit thereby facilitating its interaction with the beta and alpha subunits. This is DNA-directed RNA polymerase subunit omega from Bacillus licheniformis (strain ATCC 14580 / DSM 13 / JCM 2505 / CCUG 7422 / NBRC 12200 / NCIMB 9375 / NCTC 10341 / NRRL NRS-1264 / Gibson 46).